Consider the following 98-residue polypeptide: Large ribosomal subunit protein uL23 (98 aa).

This sequence belongs to the universal ribosomal protein uL23 family. As to quaternary structure, part of the 50S ribosomal subunit. Contacts protein L29, and trigger factor when it is bound to the ribosome.

Its function is as follows. One of the early assembly proteins it binds 23S rRNA. One of the proteins that surrounds the polypeptide exit tunnel on the outside of the ribosome. Forms the main docking site for trigger factor binding to the ribosome. This chain is Large ribosomal subunit protein uL23, found in Acidothermus cellulolyticus (strain ATCC 43068 / DSM 8971 / 11B).